We begin with the raw amino-acid sequence, 161 residues long: MDFFEINLTAVVQLLNFLFLLWILNKLLYKPFLGMMEKRKEKIEGEIVEAEKLRKQAEEIKKNAEEELKNARIRAEQIIASANSESEKIVEEAKQKAQKEAEKILQNAYLEIEKQKQEALAQVQTIATELAINLAMKVLKGTLDEKAKREYLAKVIKEYEK.

Residues Ala-10–Tyr-29 traverse the membrane as a helical segment.

It belongs to the ATPase B chain family. F-type ATPases have 2 components, F(1) - the catalytic core - and F(0) - the membrane proton channel. F(1) has five subunits: alpha(3), beta(3), gamma(1), delta(1), epsilon(1). F(0) has three main subunits: a(1), b(2) and c(10-14). The alpha and beta chains form an alternating ring which encloses part of the gamma chain. F(1) is attached to F(0) by a central stalk formed by the gamma and epsilon chains, while a peripheral stalk is formed by the delta and b chains.

Its subcellular location is the cell inner membrane. Its function is as follows. F(1)F(0) ATP synthase produces ATP from ADP in the presence of a proton or sodium gradient. F-type ATPases consist of two structural domains, F(1) containing the extramembraneous catalytic core and F(0) containing the membrane proton channel, linked together by a central stalk and a peripheral stalk. During catalysis, ATP synthesis in the catalytic domain of F(1) is coupled via a rotary mechanism of the central stalk subunits to proton translocation. Component of the F(0) channel, it forms part of the peripheral stalk, linking F(1) to F(0). The chain is ATP synthase subunit b from Fervidobacterium nodosum (strain ATCC 35602 / DSM 5306 / Rt17-B1).